Consider the following 86-residue polypeptide: MHAYVYKSQRKQDTFVYLATRDDFSVIPADVQARLAPFAFVLDVALTPERRLAQADADTVRAALASHGFYLQLPKTVVLAGECDYD.

In terms of domain architecture, YcgL spans 1–83; sequence MHAYVYKSQR…PKTVVLAGEC (83 aa).

The sequence is that of YcgL domain-containing protein XC_4086 from Xanthomonas campestris pv. campestris (strain 8004).